The primary structure comprises 1000 residues: C-module-binding factor A (1000 aa).

In terms of domain architecture, JmjC spans 113–280; sequence PREWQEYLSH…ISYFSSLPHT (168 aa). Residues 489-544 form a PHD-type; atypical zinc finger; sequence KIKCHRCEKRFKKFSIIFCTNCNARFCEQCVVNTFGQNFQVLMKRNEWECFCCKGL. Residues 492-542 form an RING-type; degenerate zinc finger; that stretch reads CHRCEKRFKKFSIIFCTNCNARFCEQCVVNTFGQNFQVLMKRNEWECFCCK. Disordered regions lie at residues 561–647 and 660–818; these read RILN…SSYS and SYGS…KNLK. Low complexity-rich tracts occupy residues 574–647, 660–683, 700–710, 732–751, and 760–789; these read NNNN…SSYS, SYGS…NNNN, SSSSGSGSSNS, NNNN…NNHH, and NNNN…STST. A compositionally biased stretch (basic and acidic residues) spans 805–818; that stretch reads DNDKPKGRPPKNLK. The segment at residues 810-818 is a DNA-binding region (a.T hook); it reads KGRPPKNLK.

As to quaternary structure, monomer.

The protein localises to the nucleus. Functionally, transcriptional regulator involved in phagocytosis and pinocytosis. Both activates and represses transcription. Regulates expression of acaA, carA, pkaC, csaA, cotB and lagC. Promotes amplification of the tRNA gene-associated retrotransposon TRE5-A, a mobile genetic element formerly called as Dictyostelium repetitive element (DRE). Suppresses agnC and agnE encoding argonaute proteins which are part of a RNA interference pathway controlling TRE5-A amplification. Required for amplification of both sense and antisense RNA transcripts, but does not activate their promoters found in A-module and C-module of the TRE5-A, respectively. Nevertheless, binds to distinct DNA sequences containing A and T stretches within the C-module in vitro. The polypeptide is C-module-binding factor A (Dictyostelium discoideum (Social amoeba)).